A 530-amino-acid chain; its full sequence is Ubiquitin carboxyl-terminal hydrolase 17-like protein 22 (530 aa).

The region spanning 80-375 (AGLQNMGNTC…QAYVLFYIQK (296 aa)) is the USP domain. The Nucleophile role is filled by cysteine 89. Histidine 334 (proton acceptor) is an active-site residue. Composition is skewed to basic and acidic residues over residues 382-392 (SESVSRGREPR) and 398-412 (DTDR…KRDH). Disordered regions lie at residues 382–412 (SESV…KRDH) and 476–530 (KNHH…LVCQ). Low complexity predominate over residues 484-495 (SSLLKLSSTTPT). Residues 496-505 (HQESMNTGTL) are compositionally biased toward polar residues. Over residues 510 to 524 (GRARRSKGKNKHSKR) the composition is skewed to basic residues.

It belongs to the peptidase C19 family. USP17 subfamily.

The protein resides in the nucleus. Its subcellular location is the endoplasmic reticulum. The catalysed reaction is Thiol-dependent hydrolysis of ester, thioester, amide, peptide and isopeptide bonds formed by the C-terminal Gly of ubiquitin (a 76-residue protein attached to proteins as an intracellular targeting signal).. Its function is as follows. Deubiquitinating enzyme that removes conjugated ubiquitin from specific proteins to regulate different cellular processes that may include cell proliferation, progression through the cell cycle, apoptosis, cell migration, and the cellular response to viral infection. In Homo sapiens (Human), this protein is Ubiquitin carboxyl-terminal hydrolase 17-like protein 22 (USP17L22).